Consider the following 205-residue polypeptide: Thiamine-phosphate synthase (205 aa).

4-amino-2-methyl-5-(diphosphooxymethyl)pyrimidine contacts are provided by residues glutamine 34 to lysine 38 and asparagine 66. Mg(2+)-binding residues include aspartate 67 and aspartate 86. Residue serine 105 coordinates 4-amino-2-methyl-5-(diphosphooxymethyl)pyrimidine. Residue threonine 131 to threonine 133 participates in 2-[(2R,5Z)-2-carboxy-4-methylthiazol-5(2H)-ylidene]ethyl phosphate binding. A 4-amino-2-methyl-5-(diphosphooxymethyl)pyrimidine-binding site is contributed by lysine 134. Glycine 163 serves as a coordination point for 2-[(2R,5Z)-2-carboxy-4-methylthiazol-5(2H)-ylidene]ethyl phosphate.

Belongs to the thiamine-phosphate synthase family. It depends on Mg(2+) as a cofactor.

The catalysed reaction is 2-[(2R,5Z)-2-carboxy-4-methylthiazol-5(2H)-ylidene]ethyl phosphate + 4-amino-2-methyl-5-(diphosphooxymethyl)pyrimidine + 2 H(+) = thiamine phosphate + CO2 + diphosphate. The enzyme catalyses 2-(2-carboxy-4-methylthiazol-5-yl)ethyl phosphate + 4-amino-2-methyl-5-(diphosphooxymethyl)pyrimidine + 2 H(+) = thiamine phosphate + CO2 + diphosphate. It carries out the reaction 4-methyl-5-(2-phosphooxyethyl)-thiazole + 4-amino-2-methyl-5-(diphosphooxymethyl)pyrimidine + H(+) = thiamine phosphate + diphosphate. It functions in the pathway cofactor biosynthesis; thiamine diphosphate biosynthesis; thiamine phosphate from 4-amino-2-methyl-5-diphosphomethylpyrimidine and 4-methyl-5-(2-phosphoethyl)-thiazole: step 1/1. Condenses 4-methyl-5-(beta-hydroxyethyl)thiazole monophosphate (THZ-P) and 2-methyl-4-amino-5-hydroxymethyl pyrimidine pyrophosphate (HMP-PP) to form thiamine monophosphate (TMP). This chain is Thiamine-phosphate synthase, found in Neisseria meningitidis serogroup A / serotype 4A (strain DSM 15465 / Z2491).